The sequence spans 118 residues: Eukaryotic translation initiation factor 4E-binding protein 1 (118 aa).

An N-acetylserine modification is found at S2. The segment at 27 to 48 (VQLPPGDYSTTPGGTLFSTTPG) is disordered. The span at 34 to 48 (YSTTPGGTLFSTTPG) shows a compositional bias: polar residues. At T37 the chain carries Phosphothreonine; by MTOR. T41 is modified (phosphothreonine). S44 is subject to Phosphoserine. T46 bears the Phosphothreonine; by MTOR mark. A Phosphothreonine modification is found at T50. Phosphotyrosine is present on Y54. The short motif at 54–60 (YDRKFLM) is the YXXXXLphi motif element. Residue K57 forms a Glycyl lysine isopeptide (Lys-Gly) (interchain with G-Cter in ubiquitin) linkage. The tract at residues 64 to 118 (NSPVTKTPPRDLPTIPGVTSPTGDEPPTEARQNHLRSSPEDKPAGGEESQFEMDI) is disordered. S65 is subject to Phosphoserine; by DYRK2, MAPK1, MAPK3 and MTOR. T70 carries the phosphothreonine; by MTOR modification. T77 carries the post-translational modification Phosphothreonine. 2 positions are modified to phosphoserine: S83 and S100. S101 is subject to Phosphoserine; by DYRK2. S112 bears the Phosphoserine mark. The short motif at 114-118 (FEMDI) is the TOS motif element.

This sequence belongs to the eIF4E-binding protein family. In terms of assembly, hypophosphorylated EIF4EBP1 competes with EIF4G1/EIF4G3 to interact with EIF4E; insulin stimulated MAP-kinase (MAPK1 and MAPK3) or mTORC1 phosphorylation of EIF4EBP1 causes dissociation of the complex allowing EIF4G1/EIF4G3 to bind and consequent initiation of translation. Interacts (via TOS motif) with RPTOR; promoting phosphorylation by mTORC1. Phosphorylated on serine and threonine residues in response to insulin, EGF and PDGF. Phosphorylation at Thr-37, Thr-46, Ser-65 and Thr-70, corresponding to the hyperphosphorylated form, is regulated by mTORC1 and abolishes binding to EIF4E. Post-translationally, ubiquitinated: when eIF4E levels are low, hypophosphorylated form is ubiquitinated by the BCR(KLHL25) complex, leading to its degradation and serving as a homeostatic mechanism to maintain translation and prevent eIF4E inhibition when eIF4E levels are low. Not ubiquitinated when hyperphosphorylated (at Thr-37, Thr-46, Ser-65 and Thr-70) or associated with eIF4E.

Its subcellular location is the cytoplasm. It localises to the nucleus. In terms of biological role, repressor of translation initiation that regulates EIF4E activity by preventing its assembly into the eIF4F complex: hypophosphorylated form competes with EIF4G1/EIF4G3 and strongly binds to EIF4E, leading to repress translation. In contrast, hyperphosphorylated form dissociates from EIF4E, allowing interaction between EIF4G1/EIF4G3 and EIF4E, leading to initiation of translation. Mediates the regulation of protein translation by hormones, growth factors and other stimuli that signal through the MAP kinase and mTORC1 pathways. The chain is Eukaryotic translation initiation factor 4E-binding protein 1 (EIF4EBP1) from Bos taurus (Bovine).